Here is an 861-residue protein sequence, read N- to C-terminus: DNA mismatch repair protein MutS (861 aa).

Residue 609–616 coordinates ATP; it reads GPNMAGKS.

Belongs to the DNA mismatch repair MutS family.

This protein is involved in the repair of mismatches in DNA. It is possible that it carries out the mismatch recognition step. This protein has a weak ATPase activity. The chain is DNA mismatch repair protein MutS from Borrelia hermsii (strain HS1 / DAH).